The sequence spans 446 residues: Probable D-serine dehydratase (446 aa).

Lys-116 bears the N6-(pyridoxal phosphate)lysine mark.

It belongs to the serine/threonine dehydratase family. DsdA subfamily. Requires pyridoxal 5'-phosphate as cofactor.

It catalyses the reaction D-serine = pyruvate + NH4(+). This is Probable D-serine dehydratase from Bacillus cereus (strain 03BB102).